A 353-amino-acid chain; its full sequence is Methylthioribose-1-phosphate isomerase (353 aa).

Substrate-binding positions include 51–53 (RGA), Arg-94, and Gln-199. The active-site Proton donor is Asp-240. 250–251 (NK) lines the substrate pocket.

This sequence belongs to the EIF-2B alpha/beta/delta subunits family. MtnA subfamily. As to quaternary structure, homodimer.

The catalysed reaction is 5-(methylsulfanyl)-alpha-D-ribose 1-phosphate = 5-(methylsulfanyl)-D-ribulose 1-phosphate. It functions in the pathway amino-acid biosynthesis; L-methionine biosynthesis via salvage pathway; L-methionine from S-methyl-5-thio-alpha-D-ribose 1-phosphate: step 1/6. In terms of biological role, catalyzes the interconversion of methylthioribose-1-phosphate (MTR-1-P) into methylthioribulose-1-phosphate (MTRu-1-P). This chain is Methylthioribose-1-phosphate isomerase, found in Bacillus cereus (strain ATCC 14579 / DSM 31 / CCUG 7414 / JCM 2152 / NBRC 15305 / NCIMB 9373 / NCTC 2599 / NRRL B-3711).